Here is a 199-residue protein sequence, read N- to C-terminus: MPIGVPKVPFRLPGEEDAVWIDVYNNRLYRERLLFLGQHVDDEIANQLIGIMMYLNGEDENKDMYLYINSPGGAVLAGISVYDAMQFVVPDVHTICMGLAASMGSFILAGGEITKRIALPHARVMIHQPASSYYDGQAGECIMEAEEVLKLRDYITRVYVQRIGKPLWVISEDMERDVFMSAQEAKTYGIVDLVAIENT.

S102 (nucleophile) is an active-site residue. The active site involves H127.

This sequence belongs to the peptidase S14 family. Component of the chloroplastic Clp protease core complex.

It is found in the plastid. Its subcellular location is the chloroplast stroma. The enzyme catalyses Hydrolysis of proteins to small peptides in the presence of ATP and magnesium. alpha-casein is the usual test substrate. In the absence of ATP, only oligopeptides shorter than five residues are hydrolyzed (such as succinyl-Leu-Tyr-|-NHMec, and Leu-Tyr-Leu-|-Tyr-Trp, in which cleavage of the -Tyr-|-Leu- and -Tyr-|-Trp bonds also occurs).. Functionally, cleaves peptides in various proteins in a process that requires ATP hydrolysis. Has a chymotrypsin-like activity. Plays a major role in the degradation of misfolded proteins. The protein is ATP-dependent Clp protease proteolytic subunit of Physcomitrium patens (Spreading-leaved earth moss).